A 557-amino-acid chain; its full sequence is NADH-quinone oxidoreductase subunit C/D (557 aa).

A compositionally biased stretch (acidic residues) spans 1 to 13 (MSLEEQQSDDPAE). The interval 1–20 (MSLEEQQSDDPAELESGVSR) is disordered. Residues 1–174 (MSLEEQQSDD…ATLREHANPL (174 aa)) form an NADH dehydrogenase I subunit C region. Residues 184–557 (NTMYINIGPH…LDIVLGEVDR (374 aa)) are NADH dehydrogenase I subunit D. Lys-517 is covalently cross-linked (Glycyl lysine isopeptide (Lys-Gly) (interchain with G-Cter in SAMP2)).

The protein in the N-terminal section; belongs to the complex I 30 kDa subunit family. It in the C-terminal section; belongs to the complex I 49 kDa subunit family. As to quaternary structure, NDH-1 is composed of 13 different subunits. Subunits NuoB, CD, E, F, and G constitute the peripheral sector of the complex.

The protein localises to the cell membrane. It catalyses the reaction a quinone + NADH + 5 H(+)(in) = a quinol + NAD(+) + 4 H(+)(out). NDH-1 shuttles electrons from NADH, via FMN and iron-sulfur (Fe-S) centers, to quinones in the respiratory chain. Couples the redox reaction to proton translocation (for every two electrons transferred, four hydrogen ions are translocated across the cytoplasmic membrane), and thus conserves the redox energy in a proton gradient. The sequence is that of NADH-quinone oxidoreductase subunit C/D (nuoCD) from Haloferax volcanii (strain ATCC 29605 / DSM 3757 / JCM 8879 / NBRC 14742 / NCIMB 2012 / VKM B-1768 / DS2) (Halobacterium volcanii).